The chain runs to 842 residues: Oleate activated transcription factor 3 (842 aa).

The segment at residues 22 to 50 is a DNA-binding region (zn(2)-C6 fungal-type); that stretch reads CTNCKRRKSKCDRQNPCSNCVRFGNKDTC. Residues 55–101 are disordered; that stretch reads NPKNTESQHGEDTDNKVKKQQPQMIKGKRNGTSSSIVGSKASSISPT. Basic and acidic residues predominate over residues 60–71; it reads ESQHGEDTDNKV. A compositionally biased stretch (low complexity) spans 87–99; it reads SSSIVGSKASSIS.

It belongs to the OAF3 family.

Its subcellular location is the cytoplasm. The protein resides in the nucleus. The protein localises to the mitochondrion. Functionally, transcriptional inhibitor with a significantly increased number of target genes in response to oleate. This is Oleate activated transcription factor 3 (OAF3) from Zygosaccharomyces rouxii (strain ATCC 2623 / CBS 732 / NBRC 1130 / NCYC 568 / NRRL Y-229).